Consider the following 619-residue polypeptide: Dihydroxy-acid dehydratase 1 (619 aa).

D81 contacts Mg(2+). Position 122 (C122) interacts with [2Fe-2S] cluster. Positions 123 and 124 each coordinate Mg(2+). K124 is subject to N6-carboxylysine. C201 provides a ligand contact to [2Fe-2S] cluster. Position 496 (E496) interacts with Mg(2+). Residue S522 is the Proton acceptor of the active site.

This sequence belongs to the IlvD/Edd family. As to quaternary structure, homodimer. [2Fe-2S] cluster serves as cofactor. It depends on Mg(2+) as a cofactor.

It carries out the reaction (2R)-2,3-dihydroxy-3-methylbutanoate = 3-methyl-2-oxobutanoate + H2O. The catalysed reaction is (2R,3R)-2,3-dihydroxy-3-methylpentanoate = (S)-3-methyl-2-oxopentanoate + H2O. It functions in the pathway amino-acid biosynthesis; L-isoleucine biosynthesis; L-isoleucine from 2-oxobutanoate: step 3/4. The protein operates within amino-acid biosynthesis; L-valine biosynthesis; L-valine from pyruvate: step 3/4. Its function is as follows. Functions in the biosynthesis of branched-chain amino acids. Catalyzes the dehydration of (2R,3R)-2,3-dihydroxy-3-methylpentanoate (2,3-dihydroxy-3-methylvalerate) into 2-oxo-3-methylpentanoate (2-oxo-3-methylvalerate) and of (2R)-2,3-dihydroxy-3-methylbutanoate (2,3-dihydroxyisovalerate) into 2-oxo-3-methylbutanoate (2-oxoisovalerate), the penultimate precursor to L-isoleucine and L-valine, respectively. The chain is Dihydroxy-acid dehydratase 1 from Burkholderia lata (strain ATCC 17760 / DSM 23089 / LMG 22485 / NCIMB 9086 / R18194 / 383).